The chain runs to 346 residues: Elongation factor Ts (346 aa).

The involved in Mg(2+) ion dislocation from EF-Tu stretch occupies residues 80 to 83 (TDFV).

Belongs to the EF-Ts family.

Its subcellular location is the cytoplasm. Associates with the EF-Tu.GDP complex and induces the exchange of GDP to GTP. It remains bound to the aminoacyl-tRNA.EF-Tu.GTP complex up to the GTP hydrolysis stage on the ribosome. The polypeptide is Elongation factor Ts (Streptococcus thermophilus (strain CNRZ 1066)).